The primary structure comprises 809 residues: Endoplasmin homolog (809 aa).

A signal peptide spans M1–T18. The ATP site is built by N111, D155, N168, and F200. N111 is a glycosylation site (N-linked (GlcNAc...) asparagine). Residues V293–E320 show a composition bias toward acidic residues. The disordered stretch occupies residues V293 to V329. Residues N410, N450, and N617 are each glycosylated (N-linked (GlcNAc...) asparagine). A disordered region spans residues S766–L809. Acidic residues predominate over residues A774–E788. Basic and acidic residues predominate over residues K789–L809. The Prevents secretion from ER motif lies at K806–L809.

Belongs to the heat shock protein 90 family.

Its subcellular location is the endoplasmic reticulum lumen. Its function is as follows. May have a molecular chaperone role in the processing of secreted materials. The sequence is that of Endoplasmin homolog from Hordeum vulgare (Barley).